The chain runs to 100 residues: Small ribosomal subunit protein uS14c (100 aa).

It belongs to the universal ribosomal protein uS14 family. In terms of assembly, part of the 30S ribosomal subunit.

The protein resides in the plastid. The protein localises to the chloroplast. In terms of biological role, binds 16S rRNA, required for the assembly of 30S particles. In Gracilaria tenuistipitata var. liui (Red alga), this protein is Small ribosomal subunit protein uS14c.